A 39-amino-acid polypeptide reads, in one-letter code: Adipokinetic prohormone type 2 (39 aa).

Residue glutamine 1 is modified to Pyrrolidone carboxylic acid. A Tryptophan amide modification is found at tryptophan 8.

Belongs to the AKH/HRTH/RPCH family. In terms of assembly, adipokinetic hormone precursor-related peptide (APRP) can form three type of disulfide-bond dimers: p1 (alpha-alpha), p2 (alpha-beta), and p3 (beta-beta).

The protein localises to the secreted. Its function is as follows. This hormone, released from cells in the corpora cardiaca, causes release of diglycerides from the fat body and stimulation of muscles to use these diglycerides as an energy source during energy-demanding processes. The chain is Adipokinetic prohormone type 2 from Schistocerca gregaria (Desert locust).